The following is a 560-amino-acid chain: Membrane protein insertase YidC (560 aa).

The chain crosses the membrane as a helical span at residues 7–27 (ILIVALAIVSYVMVLKWNQDY). The interval 43–72 (APAIPDTPLGNNASASADVPSANGETSAPL) is disordered. Transmembrane regions (helical) follow at residues 367–387 (IVGN…GIFF), 437–457 (LGGC…YWVL), 468–488 (FMLW…PIIM), and 515–535 (PIIF…YWVV).

It belongs to the OXA1/ALB3/YidC family. Type 1 subfamily. In terms of assembly, interacts with the Sec translocase complex via SecD. Specifically interacts with transmembrane segments of nascent integral membrane proteins during membrane integration.

The protein resides in the cell inner membrane. In terms of biological role, required for the insertion and/or proper folding and/or complex formation of integral membrane proteins into the membrane. Involved in integration of membrane proteins that insert both dependently and independently of the Sec translocase complex, as well as at least some lipoproteins. Aids folding of multispanning membrane proteins. The chain is Membrane protein insertase YidC from Pseudomonas fluorescens (strain SBW25).